Here is a 572-residue protein sequence, read N- to C-terminus: NADP-dependent malic enzyme (572 aa).

The residue at position 1 (M1) is an N-acetylmethionine. The Proton donor role is filled by Y102. Residue R155 coordinates NADP(+). K173 (proton acceptor) is an active-site residue. Residues E245, D246, and D269 each contribute to the a divalent metal cation site. Residues D269 and 301 to 318 (GAGE…MAME) contribute to the NADP(+) site. The residue at position 336 (S336) is a Phosphoserine.

Belongs to the malic enzymes family. As to quaternary structure, homotetramer. The cofactor is Mg(2+). Mn(2+) serves as cofactor.

The protein localises to the cytoplasm. The catalysed reaction is (S)-malate + NADP(+) = pyruvate + CO2 + NADPH. It carries out the reaction oxaloacetate + H(+) = pyruvate + CO2. Functionally, catalyzes the oxidative decarboxylation of (S)-malate in the presence of NADP(+) and divalent metal ions, and decarboxylation of oxaloacetate. The chain is NADP-dependent malic enzyme (Me1) from Mus musculus (Mouse).